A 456-amino-acid chain; its full sequence is uncharacterized protein (456 aa).

The TRAM domain maps to 2–60 (AMRKGKEYELNIEEIEFPSMGIAYHEGLKVYVKHGIPGQKVLARITTKKKDHAKGKIIE). [4Fe-4S] cluster contacts are provided by C73, C79, C82, and C162. 4 residues coordinate S-adenosyl-L-methionine: Q288, Y317, E338, and D383. C410 functions as the Nucleophile in the catalytic mechanism.

Belongs to the class I-like SAM-binding methyltransferase superfamily. RNA M5U methyltransferase family.

This is an uncharacterized protein from Clostridium tetani (strain Massachusetts / E88).